Reading from the N-terminus, the 221-residue chain is Carbonic anhydrase (221 aa).

Zn(2+) is bound by residues Cys38, Asp40, His99, and Cys102.

Belongs to the beta-class carbonic anhydrase family. The cofactor is Zn(2+).

The catalysed reaction is hydrogencarbonate + H(+) = CO2 + H2O. This is Carbonic anhydrase (cynT) from Helicobacter pylori (strain J99 / ATCC 700824) (Campylobacter pylori J99).